Here is a 405-residue protein sequence, read N- to C-terminus: Lariat debranching enzyme (405 aa).

Cys-11, His-13, Asp-40, and Asn-85 together coordinate a divalent metal cation. Positions 125–159 are lariat recognition loop; it reads SGIWKEWDFNKQRPDWNDLENNNWKANIRNLYHVR. 3 residues coordinate a divalent metal cation: His-179, His-231, and His-233. Positions 242–277 are disordered; that stretch reads HNKRSHEPPNKSTSKTKKNNNEIDLDLSSDEDERSG. Acidic residues predominate over residues 264-274; sequence IDLDLSSDEDE. Residue Ser-269 is modified to Phosphoserine.

It belongs to the lariat debranching enzyme family. It depends on Fe(2+) as a cofactor. Zn(2+) serves as cofactor. Requires Mn(2+) as cofactor.

Its subcellular location is the nucleus. The protein resides in the cytoplasm. Active in presence of diverse metals including Fe(2+), Zn(2+) and Mn(2+). Binds two metal cations in two adjacent alpha and beta metal-binding pockets. The activity is the highest with Fe(2+) bound to the 2 metal-binding sites. Activity is low with Zn(2+) and Mn(2+). Its function is as follows. Cleaves the 2'-5' phosphodiester linkage at the branch point of lariat intron pre-mRNAs after splicing and converts them into linear molecules that are subsequently degraded, thereby facilitating ribonucleotide turnover. It also participates in Ty1 retrovirus-like transposition via an RNA lariat intermediate in cDNA synthesis. The protein is Lariat debranching enzyme (DBR1) of Saccharomyces cerevisiae (strain ATCC 204508 / S288c) (Baker's yeast).